Consider the following 1791-residue polypeptide: Brefeldin A-inhibited guanine nucleotide-exchange protein 2 (1791 aa).

The residue at position 1 (Met-1) is an N-acetylmethionine. The segment at 2–224 (QESQTKSMFV…KPQSPVIQAT (223 aa)) is DCB; DCB:DCB domain and DCB:HUS domain interaction. 2 disordered regions span residues 208-292 (LEKP…DNGA) and 311-350 (AAEKQGLPEPDQAPGVPECQECTVPPAVDENSQTNGIADD). Residues Ser-214, Ser-218, and Ser-227 each carry the phosphoserine modification. Positions 214 to 225 (SKPQSPVIQATA) are enriched in polar residues. Positions 233–243 (LKQSQAQSKPT) are enriched in polar residues. A Phosphothreonine modification is found at Thr-244. Basic and acidic residues predominate over residues 244–257 (TPEKTELPNGDHAR). At Ser-277 the chain carries Phosphoserine. 2 positions are modified to phosphoserine: Ser-355 and Ser-356. Residues 515–535 (ADAQCVVDIYVNYDCDLNAAN) are HUS; DCB:HUS domain interaction. Ser-621 is subject to Phosphoserine. Thr-623 bears the Phosphothreonine mark. Phosphoserine is present on Ser-624. Position 633 is a phosphothreonine (Thr-633). The 132-residue stretch at 661-792 (FNKKPKRGIQ…IIMLTTDLHS (132 aa)) folds into the SEC7 domain. Phosphoserine is present on residues Ser-707, Ser-1518, Ser-1520, Ser-1521, Ser-1532, Ser-1535, Ser-1541, and Ser-1788.

In terms of assembly, homodimer. Interacts with ARFGEF1/BIG1; both proteins are probably part of the same or very similar macromolecular complexes. Interacts with PRKAR1A, PRKAR2A, PRKAR1B, PRKAR2B, PPP1CC, PDE3A, TNFRSF1A, MYCBP and EXOC7. Interacts with GABRB1, GABRB2 and GABRB3. In vitro phosphorylated by PKA reducing its GEF activity and dephosphorylated by phosphatase PP1. Expressed in brain (at protein level).

It localises to the cytoplasm. Its subcellular location is the membrane. The protein localises to the golgi apparatus. The protein resides in the perinuclear region. It is found in the trans-Golgi network. It localises to the endosome. Its subcellular location is the cytoskeleton. The protein localises to the microtubule organizing center. The protein resides in the centrosome. It is found in the cell projection. It localises to the dendrite. Its subcellular location is the cytoplasmic vesicle. The protein localises to the synapse. With respect to regulation, inhibited by brefeldin A. Its function is as follows. Promotes guanine-nucleotide exchange on ARF1 and ARF3 and to a lower extent on ARF5 and ARF6. Promotes the activation of ARF1/ARF5/ARF6 through replacement of GDP with GTP. Involved in the regulation of Golgi vesicular transport. Required for the integrity of the endosomal compartment. Involved in trafficking from the trans-Golgi network (TGN) to endosomes and is required for membrane association of the AP-1 complex and GGA1. Seems to be involved in recycling of the transferrin receptor from recycling endosomes to the plasma membrane. Probably is involved in the exit of GABA(A) receptors from the endoplasmic reticulum. Involved in constitutive release of tumor necrosis factor receptor 1 via exosome-like vesicles; the function seems to involve PKA and specifically PRKAR2B. Proposed to act as A kinase-anchoring protein (AKAP) and may mediate crosstalk between Arf and PKA pathways. The chain is Brefeldin A-inhibited guanine nucleotide-exchange protein 2 (Arfgef2) from Rattus norvegicus (Rat).